The sequence spans 359 residues: Stearoyl-CoA desaturase (359 aa).

Residues Met1 to Val72 are Cytoplasmic-facing. A helical transmembrane segment spans residues Trp73 to Ile93. Asn75 provides a ligand contact to substrate. Topologically, residues Pro94–Lys97 are lumenal. The helical transmembrane segment at Ile98–Gly118 threads the bilayer. Residues Ala119 to Tyr217 lie on the Cytoplasmic side of the membrane. Residues His120 and His125 each coordinate Fe cation. The short motif at His120–His125 is the Histidine box-1 element. Substrate is bound by residues Asn148, Arg155, and Asp156. Fe cation is bound by residues His157, His160, and His161. Positions His157 to His161 match the Histidine box-2 motif. Residues Arg188 and Lys189 each coordinate substrate. Phosphoserine occurs at positions 198 and 203. Residues Tyr218–Leu237 form a helical membrane-spanning segment. At Trp238 to Thr241 the chain is on the lumenal side. Residues Phe242–Leu263 form a helical membrane-spanning segment. Position 262 (Trp262) interacts with substrate. Over Val264–Gly359 the chain is Cytoplasmic. Residues His269, His298, His301, and His302 each contribute to the Fe cation site. The Histidine box-3 motif lies at His298–His302.

This sequence belongs to the fatty acid desaturase type 1 family. The cofactor is Fe(2+).

The protein localises to the endoplasmic reticulum membrane. It carries out the reaction octadecanoyl-CoA + 2 Fe(II)-[cytochrome b5] + O2 + 2 H(+) = (9Z)-octadecenoyl-CoA + 2 Fe(III)-[cytochrome b5] + 2 H2O. The enzyme catalyses hexadecanoyl-CoA + 2 Fe(II)-[cytochrome b5] + O2 + 2 H(+) = (9Z)-hexadecenoyl-CoA + 2 Fe(III)-[cytochrome b5] + 2 H2O. Stearoyl-CoA desaturase that utilizes O(2) and electrons from reduced cytochrome b5 to introduce the first double bond into saturated fatty acyl-CoA substrates. Catalyzes the insertion of a cis double bond at the delta-9 position into fatty acyl-CoA substrates including palmitoyl-CoA and stearoyl-CoA. Gives rise to a mixture of 16:1 and 18:1 unsaturated fatty acids. Plays an important role in lipid biosynthesis. Plays an important role in regulating the expression of genes that are involved in lipogenesis and in regulating mitochondrial fatty acid oxidation. Plays an important role in body energy homeostasis. Contributes to the biosynthesis of membrane phospholipids, cholesterol esters and triglycerides. This Bos taurus (Bovine) protein is Stearoyl-CoA desaturase (SCD).